The sequence spans 910 residues: Importin subunit beta-2 (910 aa).

19 HEAT repeats span residues 12–39 (VLVE…NLLE), 44–82 (IPDL…VSSL), 93–126 (YTKS…RWGI), 132–169 (VLPQ…LDRD), 177–207 (DFMI…QFVL), 220–247 (FLET…VYLL), 259–286 (GSIV…FWLA), 302–406 (DKIV…LSSF), 414–442 (IILP…GAIA), 454–481 (PELY…TLGR), 499–532 (FVPL…EEQA), 540–573 (LEPI…ADYV), 581–619 (RYIE…VALR), 627–677 (AETY…ALGS), 690–721 (LGQI…MYCF), 729–764 (DALL…LQLG), 772–807 (KPLL…VYNP), 815–848 (ELFY…LACN), and 857–888 (PMFV…VELF). Residues 34-122 (ALNLLEKAKD…SGNVITTIIS (89 aa)) enclose the Importin N-terminal domain. The segment at 333 to 381 (DREEDIRPQHAKGKSRITLNTQGPITQQGSSNADADELEDEDEDDDEFD) is disordered. The segment covering 349–364 (ITLNTQGPITQQGSSN) has biased composition (polar residues). The span at 366–381 (DADELEDEDEDDDEFD) shows a compositional bias: acidic residues.

Belongs to the importin beta family. Importin beta-2 subfamily. As to quaternary structure, interacts with Ran; interacts specifically with the GTP-bound form of Ran (GTP-Ran), protecting it from GTP hydrolysis and nucleotide exchange. Interacts with nucleoporins.

It localises to the cytoplasm. The protein resides in the nucleus envelope. Functionally, functions in nuclear protein import as nuclear transport receptor. Serves as receptor for arginine/glycine-rich nuclear localization signals (rg-NLS) and PY-NLS in cargo substrates. Its predominant cargo substrate seems to be mRNA-binding proteins. Mediates docking of the importin/substrate complex to the nuclear pore complex (NPC) through binding to repeat-containing nucleoporins. The complex is subsequently translocated through the pore by an energy requiring, Ran-dependent mechanism. At the nucleoplasmic side of the NPC, GTP-Ran binding leads to release of the cargo. The importin is re-exported from the nucleus to the cytoplasm where GTP hydrolysis releases Ran from importin. The directionality of nuclear import is thought to be conferred by an asymmetric distribution of the GTP- and GDP-bound forms of Ran between the cytoplasm and nucleus. This Schizosaccharomyces pombe (strain 972 / ATCC 24843) (Fission yeast) protein is Importin subunit beta-2.